A 391-amino-acid chain; its full sequence is Homocitrate synthase AksA (391 aa).

One can recognise a Pyruvate carboxyltransferase domain in the interval 20 to 271 (ITIYDTTLRD…DLGFNIGVLY (252 aa)).

Belongs to the alpha-IPM synthase/homocitrate synthase family.

It catalyses the reaction acetyl-CoA + 2-oxoglutarate + H2O = (2R)-homocitrate + CoA + H(+). The enzyme catalyses 2-oxoadipate + acetyl-CoA + H2O = (R)-dihomocitrate + CoA + H(+). The catalysed reaction is 2-oxoheptanedioate + acetyl-CoA + H2O = (R)-trihomocitrate + CoA + H(+). The protein operates within organic acid metabolism; 2-oxosuberate biosynthesis. Catalyzes the condensation of alpha-ketoglutarate and acetyl-CoA to form (R)-homocitrate. Can also catalyze the condensation of alpha-ketoadipate with acetyl-CoA to form (R)-homo(2)citrate, and the condensation of alpha-ketopimelate with acetyl-CoA to form (R)-homo(3)citrate. These reactions are part of the biosynthesis pathway of coenzyme B and biotin. The polypeptide is Homocitrate synthase AksA (aksA) (Methanothermobacter thermautotrophicus (strain ATCC 29096 / DSM 1053 / JCM 10044 / NBRC 100330 / Delta H) (Methanobacterium thermoautotrophicum)).